We begin with the raw amino-acid sequence, 226 residues long: Sugar fermentation stimulation protein homolog (226 aa).

Belongs to the SfsA family.

In Clostridium beijerinckii (strain ATCC 51743 / NCIMB 8052) (Clostridium acetobutylicum), this protein is Sugar fermentation stimulation protein homolog.